Here is a 219-residue protein sequence, read N- to C-terminus: Lipid transferase CIDEB (219 aa).

The CIDE-N domain maps to 33-110 (PRQRPFRVCD…VLELGQSWSP (78 aa)).

This sequence belongs to the CIDE family. In terms of assembly, interacts with DFFA. Interacts with DFFB; inhibited by DFFB. Interacts with APOB. Interacts with PREB/SEC12; facilitating loading of SCAP-SREBP into COPII vesicles.

The protein localises to the lipid droplet. The protein resides in the endoplasmic reticulum membrane. Its subcellular location is the golgi apparatus. It localises to the cytoplasmic vesicle. It is found in the COPI-coated vesicle. Functionally, lipid transferase specifically expressed in hepatocytes, which promotes unilocular lipid droplet formation by mediating lipid droplet fusion. Lipid droplet fusion promotes their enlargement, restricting lipolysis and favoring lipid storage. Localizes on the lipid droplet surface, at focal contact sites between lipid droplets, and mediates atypical lipid droplet fusion by promoting directional net neutral lipid transfer from the smaller to larger lipid droplets. The transfer direction may be driven by the internal pressure difference between the contacting lipid droplet pair. Promotes lipid exchange and lipid droplet fusion in both small and large lipid droplet-containing hepatocytes. In addition to its role in lipid droplet fusion, also involved in cytoplasmic vesicle biogenesis and transport. Required for very-low-density lipoprotein (VLDL) lipidation and maturation. Probably involved in the biogenesis of VLDL transport vesicles by forming a COPII vesicle coat and facilitating the formation of endoplasmic reticulum-derived large vesicles. Also involved in sterol-regulated export of the SCAP-SREBP complex, composed of SCAP, SREBF1/SREBP1 and SREBF2/SREBP2, by promoting loading of SCAP-SREBP into COPII vesicles. May also activate apoptosis. In Bos taurus (Bovine), this protein is Lipid transferase CIDEB (CIDEB).